We begin with the raw amino-acid sequence, 98 residues long: MIPTYMNIMLAFTISLLGMLTYRSHLVASLLCLEGMMMSLFIMTTLIASNTHSPLINIMPIILLVFAACEAAVGLALLISISNTYGLDYIHNLNLLQC.

Helical transmembrane passes span 1-21 (MIPT…GMLT), 27-47 (VASL…TTLI), and 61-81 (IILL…LISI).

Belongs to the complex I subunit 4L family. As to quaternary structure, core subunit of respiratory chain NADH dehydrogenase (Complex I) which is composed of 45 different subunits.

Its subcellular location is the mitochondrion inner membrane. The enzyme catalyses a ubiquinone + NADH + 5 H(+)(in) = a ubiquinol + NAD(+) + 4 H(+)(out). In terms of biological role, core subunit of the mitochondrial membrane respiratory chain NADH dehydrogenase (Complex I) which catalyzes electron transfer from NADH through the respiratory chain, using ubiquinone as an electron acceptor. Part of the enzyme membrane arm which is embedded in the lipid bilayer and involved in proton translocation. The protein is NADH-ubiquinone oxidoreductase chain 4L (MT-ND4L) of Macaca nigra (Celebes black macaque).